Here is a 215-residue protein sequence, read N- to C-terminus: Adenylate kinase (215 aa).

10–15 contributes to the ATP binding site; that stretch reads GAGKGT. The tract at residues 30–59 is NMP; that stretch reads STGDLLRAAVAAGTPLGKEAKAYMDRGELV. Residues Thr31, Arg36, 57-59, 85-88, and Gln92 each bind AMP; these read ELV and GFPR. Residues 126–163 are LID; it reads GRRTCKSCGQMYNVYYSPSKVEGKCDKCGGELFQRDDD. An ATP-binding site is contributed by Arg127. Zn(2+) is bound by residues Cys130, Cys133, Cys150, and Cys153. AMP contacts are provided by Arg160 and Arg171. Residue Gly199 coordinates ATP.

Belongs to the adenylate kinase family. As to quaternary structure, monomer.

The protein resides in the cytoplasm. It catalyses the reaction AMP + ATP = 2 ADP. It functions in the pathway purine metabolism; AMP biosynthesis via salvage pathway; AMP from ADP: step 1/1. In terms of biological role, catalyzes the reversible transfer of the terminal phosphate group between ATP and AMP. Plays an important role in cellular energy homeostasis and in adenine nucleotide metabolism. This is Adenylate kinase from Thermodesulfovibrio yellowstonii (strain ATCC 51303 / DSM 11347 / YP87).